Here is an 88-residue protein sequence, read N- to C-terminus: Protein transport protein SBH2 (88 aa).

Positions 1–42 are disordered; that stretch reads MAASVPPGGQRILQKRRQAQSIKEKQAKQTPTSTRQAGYGGS. Over 1–61 the chain is Cytoplasmic; that stretch reads MAASVPPGGQ…DEANGFRVDS (61 aa). A compositionally biased stretch (polar residues) spans 28 to 42; it reads KQTPTSTRQAGYGGS. Residues 62–82 form a helical membrane-spanning segment; that stretch reads LVVLFLSVGFIFSVIALHLLT.

Belongs to the SEC61-beta family. As to quaternary structure, component of the heterotrimeric Ssh1 complex, which is composed of SSH1, SBH2 and SSS1.

The protein localises to the endoplasmic reticulum membrane. Functionally, part of the Ssh1 complex, which probably is the major component of a channel-forming translocon complex that may function exclusively in the cotranslational pathway of protein endoplasmic reticulum (ER) import. The protein is Protein transport protein SBH2 (SBH2) of Saccharomyces cerevisiae (strain ATCC 204508 / S288c) (Baker's yeast).